Here is a 317-residue protein sequence, read N- to C-terminus: tRNA uridine(34) hydroxylase (317 aa).

The region spanning 129–223 (TDPEVLLIDT…YLEEVPEQES (95 aa)) is the Rhodanese domain. The active-site Cysteine persulfide intermediate is the cysteine 183. A disordered region spans residues 298-317 (AKARNQPHPIGRNYRLPSEA).

This sequence belongs to the TrhO family.

The catalysed reaction is uridine(34) in tRNA + AH2 + O2 = 5-hydroxyuridine(34) in tRNA + A + H2O. Functionally, catalyzes oxygen-dependent 5-hydroxyuridine (ho5U) modification at position 34 in tRNAs. The chain is tRNA uridine(34) hydroxylase from Pseudomonas syringae pv. tomato (strain ATCC BAA-871 / DC3000).